The sequence spans 159 residues: NADH-quinone oxidoreductase subunit B (159 aa).

[4Fe-4S] cluster contacts are provided by Cys37, Cys38, Cys102, and Cys132.

It belongs to the complex I 20 kDa subunit family. As to quaternary structure, NDH-1 is composed of 14 different subunits. Subunits NuoB, C, D, E, F, and G constitute the peripheral sector of the complex. It depends on [4Fe-4S] cluster as a cofactor.

Its subcellular location is the cell inner membrane. It catalyses the reaction a quinone + NADH + 5 H(+)(in) = a quinol + NAD(+) + 4 H(+)(out). NDH-1 shuttles electrons from NADH, via FMN and iron-sulfur (Fe-S) centers, to quinones in the respiratory chain. Couples the redox reaction to proton translocation (for every two electrons transferred, four hydrogen ions are translocated across the cytoplasmic membrane), and thus conserves the redox energy in a proton gradient. The chain is NADH-quinone oxidoreductase subunit B from Paraburkholderia phymatum (strain DSM 17167 / CIP 108236 / LMG 21445 / STM815) (Burkholderia phymatum).